The chain runs to 276 residues: Formamidopyrimidine-DNA glycosylase (276 aa).

Pro2 functions as the Schiff-base intermediate with DNA in the catalytic mechanism. Catalysis depends on Glu3, which acts as the Proton donor. Lys58 functions as the Proton donor; for beta-elimination activity in the catalytic mechanism. DNA is bound by residues His94, Arg112, and Arg157. The segment at 242–276 (FVYDRAGQPCRVCGTPIKQIVQGQRSTYYCPTCQR) adopts an FPG-type zinc-finger fold. The Proton donor; for delta-elimination activity role is filled by Arg266.

The protein belongs to the FPG family. As to quaternary structure, monomer. Requires Zn(2+) as cofactor.

It carries out the reaction Hydrolysis of DNA containing ring-opened 7-methylguanine residues, releasing 2,6-diamino-4-hydroxy-5-(N-methyl)formamidopyrimidine.. The enzyme catalyses 2'-deoxyribonucleotide-(2'-deoxyribose 5'-phosphate)-2'-deoxyribonucleotide-DNA = a 3'-end 2'-deoxyribonucleotide-(2,3-dehydro-2,3-deoxyribose 5'-phosphate)-DNA + a 5'-end 5'-phospho-2'-deoxyribonucleoside-DNA + H(+). In terms of biological role, involved in base excision repair of DNA damaged by oxidation or by mutagenic agents. Acts as a DNA glycosylase that recognizes and removes damaged bases. Has a preference for oxidized purines, such as 7,8-dihydro-8-oxoguanine (8-oxoG). Has AP (apurinic/apyrimidinic) lyase activity and introduces nicks in the DNA strand. Cleaves the DNA backbone by beta-delta elimination to generate a single-strand break at the site of the removed base with both 3'- and 5'-phosphates. This is Formamidopyrimidine-DNA glycosylase from Paraburkholderia phymatum (strain DSM 17167 / CIP 108236 / LMG 21445 / STM815) (Burkholderia phymatum).